The following is a 562-amino-acid chain: DNA ligase (562 aa).

E252 contributes to the ATP binding site. The active-site N6-AMP-lysine intermediate is K254. Residues R259, R274, E303, F343, R419, and K425 each contribute to the ATP site.

It belongs to the ATP-dependent DNA ligase family. Requires Mg(2+) as cofactor.

The catalysed reaction is ATP + (deoxyribonucleotide)n-3'-hydroxyl + 5'-phospho-(deoxyribonucleotide)m = (deoxyribonucleotide)n+m + AMP + diphosphate.. Its function is as follows. DNA ligase that seals nicks in double-stranded DNA during DNA replication, DNA recombination and DNA repair. This chain is DNA ligase, found in Methanococcus aeolicus (strain ATCC BAA-1280 / DSM 17508 / OCM 812 / Nankai-3).